The primary structure comprises 378 residues: MEFRIDSIDGNARACTIKTEHSEIKTPIFMPVGTAAAVKSLDAIDMMEILDAPIILGNTYHLYLRPGDEIISKLGGLHGFSGYKRSFLTDSGGFQAFSLGDNVKFTDEGIWFKSHIDGSKHFFSPEKVIDIEYNLNSDIMMVLDDLIALPNTKERIKKSIERTTEWAYRSLVHHVNRGKKNNLFAIIQGGTDFEFRRISAESLVSLEYKGYTFDGFAIGGLSVGEENQLMYDTIEATTPYMPKDKPRYLMGVGTPEDIIEAVERGVDMFDCVMPTRNARNGYLFTTFGTLRIKNAKYKLDESPIDPKCNCYTCRNFSRAYLNHLFKAKELTYFRLASIHNLHYYLNFVKEIREAILEGRFKEYKKEFYSLRAMNSLEI.

Catalysis depends on Asp90, which acts as the Proton acceptor. Substrate contacts are provided by residues 90–94 (DSGGF), Asp144, Gln188, and Gly220. Residues 251–257 (GVGTPED) form an RNA binding region. Asp270 (nucleophile) is an active-site residue. The segment at 275–279 (TRNAR) is RNA binding; important for wobble base 34 recognition. Residues Cys308, Cys310, Cys313, and His339 each contribute to the Zn(2+) site.

Belongs to the queuine tRNA-ribosyltransferase family. As to quaternary structure, homodimer. Within each dimer, one monomer is responsible for RNA recognition and catalysis, while the other monomer binds to the replacement base PreQ1. Zn(2+) is required as a cofactor.

The enzyme catalyses 7-aminomethyl-7-carbaguanine + guanosine(34) in tRNA = 7-aminomethyl-7-carbaguanosine(34) in tRNA + guanine. It functions in the pathway tRNA modification; tRNA-queuosine biosynthesis. Its function is as follows. Catalyzes the base-exchange of a guanine (G) residue with the queuine precursor 7-aminomethyl-7-deazaguanine (PreQ1) at position 34 (anticodon wobble position) in tRNAs with GU(N) anticodons (tRNA-Asp, -Asn, -His and -Tyr). Catalysis occurs through a double-displacement mechanism. The nucleophile active site attacks the C1' of nucleotide 34 to detach the guanine base from the RNA, forming a covalent enzyme-RNA intermediate. The proton acceptor active site deprotonates the incoming PreQ1, allowing a nucleophilic attack on the C1' of the ribose to form the product. After dissociation, two additional enzymatic reactions on the tRNA convert PreQ1 to queuine (Q), resulting in the hypermodified nucleoside queuosine (7-(((4,5-cis-dihydroxy-2-cyclopenten-1-yl)amino)methyl)-7-deazaguanosine). This is Queuine tRNA-ribosyltransferase from Nautilia profundicola (strain ATCC BAA-1463 / DSM 18972 / AmH).